The sequence spans 888 residues: Semaphorin-6B (888 aa).

The signal sequence occupies residues methionine 1–glycine 25. Topologically, residues leucine 26 to serine 603 are extracellular. Residues proline 31 to valine 523 form the Sema domain. An N-linked (GlcNAc...) asparagine glycan is attached at asparagine 74. 2 disulfide bridges follow: cysteine 116–cysteine 126 and cysteine 144–cysteine 153. Residues asparagine 155, asparagine 167, and asparagine 291 are each glycosylated (N-linked (GlcNAc...) asparagine). Cystine bridges form between cysteine 267-cysteine 378 and cysteine 292-cysteine 337. N-linked (GlcNAc...) asparagine glycosylation is found at asparagine 386, asparagine 441, and asparagine 462. Cystine bridges form between cysteine 486/cysteine 517, cysteine 526/cysteine 544, cysteine 532/cysteine 578, and cysteine 536/cysteine 552. Residues valine 604 to leucine 624 form a helical membrane-spanning segment. Residues arginine 625 to proline 888 are Cytoplasmic-facing. 3 disordered regions span residues valine 651 to alanine 679, leucine 695 to leucine 742, and arginine 757 to proline 888. Residues glycine 661–glycine 674 are compositionally biased toward gly residues. Arginine 665 carries the post-translational modification Omega-N-methylarginine. Positions leucine 706–glutamine 717 are enriched in low complexity.

Belongs to the semaphorin family. In terms of assembly, (Microbial infection) Interacts with P.sordellii toxin TcsL; semaphorins SEMA6A and SEMA6B constitute the major host receptors for TcsL in the vascular endothelium. As to expression, expressed in the brain in GABAergic neurons.

It localises to the cell membrane. Its function is as follows. Functions as a cell surface repellent for mossy fibers of developing neurons in the hippocampus where it plays a role in axon guidance. May function through the PLXNA4 receptor expressed by mossy cell axons. In terms of biological role, (Microbial infection) Acts as a receptor for P.sordellii toxin TcsL in the in the vascular endothelium. This Homo sapiens (Human) protein is Semaphorin-6B (SEMA6B).